The chain runs to 403 residues: MPVARSSKAQSSKQPRASKAPSVTENVPPEKEEGCQAKRSPSSPQGGPKKRSAFGDITNAHKNQVVTGKKEGVKAPTRKATRAPPAPIVAKNNEINLKKSLRKTPPADVPVEPEKDSVPEEPVQQVPVVEDIDKEQLGDPYANAEYAKEIFDYMREREEKFLLPDYMEKQSDISRDMRAILVDWMVEVQENFELNHETLYLAVKLVDHYLVEVVSMRDKLQLIGSTAVLIASKFEERCPPCVDDFLYICDDAYKREELIAMETSILRTLNFDINIPIPYRFLRRFAKCARASMETLTLARFVCEMTLQEYDYARERPSKLAASSLLLALTMKNLGGWTPTLEYYSGYCAQDLHPLVKRLNFLLTYQPCDKLKAVRTKYSHRVFFEVAKTTPMDMMKLEEKLKS.

2 disordered regions span residues 1 to 86 and 102 to 122; these read MPVA…APPA and RKTP…PEEP. The span at 7-25 shows a compositional bias: polar residues; the sequence is SKAQSSKQPRASKAPSVTE. The short motif at 51–59 is the D-box element; that stretch reads RSAFGDITN.

It belongs to the cyclin family. Cyclin AB subfamily. Interacts with the CDK1 and CDK2 protein kinases. Post-translationally, ubiquitinated, leading to its degradation.

It localises to the nucleus. Functionally, cyclins are positive regulatory subunits of the cyclin-dependent kinases (CDKs), and thereby play an essential role in the control of the cell cycle, notably via their destruction during cell division. Could be involved at the G2/M (mitosis or meiosis) transition. G2/M cyclins accumulate steadily during G2 and are abruptly destroyed at mitosis. The sequence is that of G2/mitotic-specific cyclin-B3 (CCNB3) from Gallus gallus (Chicken).